A 62-amino-acid polypeptide reads, in one-letter code: uncharacterized protein (62 aa).

This is an uncharacterized protein from Caenorhabditis elegans.